The primary structure comprises 273 residues: 4-hydroxy-tetrahydrodipicolinate reductase (273 aa).

NAD(+) is bound by residues 12-17 (GAGGRM) and glutamate 38. Position 39 (arginine 39) interacts with NADP(+). NAD(+) contacts are provided by residues 102-104 (GTT) and 126-129 (AANF). Residue histidine 159 is the Proton donor/acceptor of the active site. Residue histidine 160 participates in (S)-2,3,4,5-tetrahydrodipicolinate binding. Catalysis depends on lysine 163, which acts as the Proton donor. (S)-2,3,4,5-tetrahydrodipicolinate is bound at residue 169-170 (GT).

This sequence belongs to the DapB family. Homotetramer.

It is found in the cytoplasm. It carries out the reaction (S)-2,3,4,5-tetrahydrodipicolinate + NAD(+) + H2O = (2S,4S)-4-hydroxy-2,3,4,5-tetrahydrodipicolinate + NADH + H(+). The enzyme catalyses (S)-2,3,4,5-tetrahydrodipicolinate + NADP(+) + H2O = (2S,4S)-4-hydroxy-2,3,4,5-tetrahydrodipicolinate + NADPH + H(+). Its pathway is amino-acid biosynthesis; L-lysine biosynthesis via DAP pathway; (S)-tetrahydrodipicolinate from L-aspartate: step 4/4. Catalyzes the conversion of 4-hydroxy-tetrahydrodipicolinate (HTPA) to tetrahydrodipicolinate. The chain is 4-hydroxy-tetrahydrodipicolinate reductase from Salmonella paratyphi A (strain ATCC 9150 / SARB42).